The primary structure comprises 453 residues: Homogentisate 1,2-dioxygenase (453 aa).

H306 (proton acceptor) is an active-site residue. 2 residues coordinate Fe cation: H349 and E355. Residues Y364 and H385 each coordinate homogentisate. H385 lines the Fe cation pocket.

Belongs to the homogentisate dioxygenase family. As to quaternary structure, hexamer; dimer of trimers. Requires Fe cation as cofactor.

It catalyses the reaction homogentisate + O2 = 4-maleylacetoacetate + H(+). Its pathway is amino-acid degradation; L-phenylalanine degradation; acetoacetate and fumarate from L-phenylalanine: step 4/6. In terms of biological role, involved in the catabolism of homogentisate (2,5-dihydroxyphenylacetate or 2,5-OH-PhAc), a central intermediate in the degradation of phenylalanine and tyrosine. Catalyzes the oxidative ring cleavage of the aromatic ring of homogentisate to yield maleylacetoacetate. This Rhizobium johnstonii (strain DSM 114642 / LMG 32736 / 3841) (Rhizobium leguminosarum bv. viciae) protein is Homogentisate 1,2-dioxygenase.